The sequence spans 203 residues: HTH-type transcriptional regulator BetI (203 aa).

The 61-residue stretch at 8 to 68 (PVRRKALVDA…ATIRSLLGKL (61 aa)) folds into the HTH tetR-type domain. A DNA-binding region (H-T-H motif) is located at residues 31-50 (TMSEIARTAGVSPALAHHYF).

It functions in the pathway amine and polyamine biosynthesis; betaine biosynthesis via choline pathway [regulation]. Repressor involved in the biosynthesis of the osmoprotectant glycine betaine. It represses transcription of the choline transporter BetT and the genes of BetAB involved in the synthesis of glycine betaine. This chain is HTH-type transcriptional regulator BetI, found in Rhizobium meliloti (strain 1021) (Ensifer meliloti).